A 305-amino-acid polypeptide reads, in one-letter code: UDP-3-O-acyl-N-acetylglucosamine deacetylase (305 aa).

Positions 79, 238, and 242 each coordinate Zn(2+). H265 acts as the Proton donor in catalysis.

The protein belongs to the LpxC family. Zn(2+) serves as cofactor.

The enzyme catalyses a UDP-3-O-[(3R)-3-hydroxyacyl]-N-acetyl-alpha-D-glucosamine + H2O = a UDP-3-O-[(3R)-3-hydroxyacyl]-alpha-D-glucosamine + acetate. The protein operates within glycolipid biosynthesis; lipid IV(A) biosynthesis; lipid IV(A) from (3R)-3-hydroxytetradecanoyl-[acyl-carrier-protein] and UDP-N-acetyl-alpha-D-glucosamine: step 2/6. Functionally, catalyzes the hydrolysis of UDP-3-O-myristoyl-N-acetylglucosamine to form UDP-3-O-myristoylglucosamine and acetate, the committed step in lipid A biosynthesis. The sequence is that of UDP-3-O-acyl-N-acetylglucosamine deacetylase from Vibrio atlanticus (strain LGP32) (Vibrio splendidus (strain Mel32)).